We begin with the raw amino-acid sequence, 119 residues long: Large ribosomal subunit protein uL18 (119 aa).

It belongs to the universal ribosomal protein uL18 family. As to quaternary structure, part of the 50S ribosomal subunit; part of the 5S rRNA/L5/L18/L25 subcomplex. Contacts the 5S and 23S rRNAs.

This is one of the proteins that bind and probably mediate the attachment of the 5S RNA into the large ribosomal subunit, where it forms part of the central protuberance. In Tropheryma whipplei (strain TW08/27) (Whipple's bacillus), this protein is Large ribosomal subunit protein uL18.